Here is a 367-residue protein sequence, read N- to C-terminus: Quinolinate synthase (367 aa).

Residues His45 and Ser62 each coordinate iminosuccinate. Cys109 is a [4Fe-4S] cluster binding site. Residues 140–142 (YVN) and Ser161 contribute to the iminosuccinate site. Cys229 contributes to the [4Fe-4S] cluster binding site. Iminosuccinate-binding positions include 255-257 (HPE) and Thr272. Cys319 serves as a coordination point for [4Fe-4S] cluster.

This sequence belongs to the quinolinate synthase family. Type 3 subfamily. [4Fe-4S] cluster is required as a cofactor.

The protein resides in the cytoplasm. It catalyses the reaction iminosuccinate + dihydroxyacetone phosphate = quinolinate + phosphate + 2 H2O + H(+). It participates in cofactor biosynthesis; NAD(+) biosynthesis; quinolinate from iminoaspartate: step 1/1. Catalyzes the condensation of iminoaspartate with dihydroxyacetone phosphate to form quinolinate. The protein is Quinolinate synthase of Halalkalibacterium halodurans (strain ATCC BAA-125 / DSM 18197 / FERM 7344 / JCM 9153 / C-125) (Bacillus halodurans).